A 124-amino-acid chain; its full sequence is Small ribosomal subunit protein uS13 (124 aa).

Residues 96-124 (LPVRGQRTKTNARTRKGPRRTVAGKKKAK) are disordered.

The protein belongs to the universal ribosomal protein uS13 family. As to quaternary structure, part of the 30S ribosomal subunit. Forms a loose heterodimer with protein S19. Forms two bridges to the 50S subunit in the 70S ribosome.

Its function is as follows. Located at the top of the head of the 30S subunit, it contacts several helices of the 16S rRNA. In the 70S ribosome it contacts the 23S rRNA (bridge B1a) and protein L5 of the 50S subunit (bridge B1b), connecting the 2 subunits; these bridges are implicated in subunit movement. Contacts the tRNAs in the A and P-sites. The polypeptide is Small ribosomal subunit protein uS13 (Symbiobacterium thermophilum (strain DSM 24528 / JCM 14929 / IAM 14863 / T)).